The sequence spans 314 residues: Ribosomal protein L11 methyltransferase (314 aa).

S-adenosyl-L-methionine-binding residues include threonine 163, glycine 184, aspartate 206, and asparagine 248.

Belongs to the methyltransferase superfamily. PrmA family.

It is found in the cytoplasm. It catalyses the reaction L-lysyl-[protein] + 3 S-adenosyl-L-methionine = N(6),N(6),N(6)-trimethyl-L-lysyl-[protein] + 3 S-adenosyl-L-homocysteine + 3 H(+). Functionally, methylates ribosomal protein L11. The sequence is that of Ribosomal protein L11 methyltransferase from Lactobacillus delbrueckii subsp. bulgaricus (strain ATCC BAA-365 / Lb-18).